The chain runs to 86 residues: Evasin-3 (86 aa).

The first 20 residues, 1 to 20, serve as a signal peptide directing secretion; sequence MRALLARLLLCVLVVSDSKG. 3 cysteine pairs are disulfide-bonded: cysteine 42–cysteine 57, cysteine 46–cysteine 59, and cysteine 53–cysteine 70. An N-linked (GlcNAc...) asparagine glycan is attached at asparagine 45. An N-linked (GlcNAc...) asparagine glycan is attached at asparagine 76.

Monomer.

The protein resides in the secreted. In terms of biological role, salivary chemokine-binding protein which shows chemokine neutralizing activity and binds to host chemokines CXCL1, CXCL2, CXCL3, CXCL5, CXCL6 and CXCL8. Binds to CXCL8 with 1:1 stoichiometry. Disrupts CXCL8 homodimer formation, disrupts the glycosaminoglycan-binding site of CXCL8 and inhibits the interaction of CXCL8 with CXCR2. The sequence is that of Evasin-3 from Rhipicephalus sanguineus (Brown dog tick).